A 299-amino-acid chain; its full sequence is N-acetylmuramic acid 6-phosphate etherase (299 aa).

Positions 57–220 (ISAAFHKKGR…TTGAMIRTGK (164 aa)) constitute an SIS domain. E85 acts as the Proton donor in catalysis. The active site involves E116.

Belongs to the GCKR-like family. MurNAc-6-P etherase subfamily. As to quaternary structure, homodimer.

The catalysed reaction is N-acetyl-D-muramate 6-phosphate + H2O = N-acetyl-D-glucosamine 6-phosphate + (R)-lactate. Its pathway is amino-sugar metabolism; 1,6-anhydro-N-acetylmuramate degradation. It participates in amino-sugar metabolism; N-acetylmuramate degradation. The protein operates within cell wall biogenesis; peptidoglycan recycling. Specifically catalyzes the cleavage of the D-lactyl ether substituent of MurNAc 6-phosphate, producing GlcNAc 6-phosphate and D-lactate. Together with AnmK, is also required for the utilization of anhydro-N-acetylmuramic acid (anhMurNAc) either imported from the medium or derived from its own cell wall murein, and thus plays a role in cell wall recycling. This is N-acetylmuramic acid 6-phosphate etherase from Psychromonas ingrahamii (strain DSM 17664 / CCUG 51855 / 37).